Reading from the N-terminus, the 296-residue chain is 4-hydroxybenzoate octaprenyltransferase (296 aa).

8 helical membrane passes run 29-49 (IGIY…ADGV), 55-75 (LLIF…INDF), 102-122 (AWIT…LTNA), 146-166 (YYPQ…AFTA), 169-189 (GELP…TVAY), 219-239 (LIIG…GNRF), 241-261 (LGLC…WEAW), and 275-295 (FLHN…DYAL).

The protein belongs to the UbiA prenyltransferase family. Mg(2+) is required as a cofactor.

The protein resides in the cell inner membrane. The enzyme catalyses all-trans-octaprenyl diphosphate + 4-hydroxybenzoate = 4-hydroxy-3-(all-trans-octaprenyl)benzoate + diphosphate. It functions in the pathway cofactor biosynthesis; ubiquinone biosynthesis. In terms of biological role, catalyzes the prenylation of para-hydroxybenzoate (PHB) with an all-trans polyprenyl group. Mediates the second step in the final reaction sequence of ubiquinone-8 (UQ-8) biosynthesis, which is the condensation of the polyisoprenoid side chain with PHB, generating the first membrane-bound Q intermediate 3-octaprenyl-4-hydroxybenzoate. The protein is 4-hydroxybenzoate octaprenyltransferase of Pseudomonas aeruginosa (strain LESB58).